Consider the following 259-residue polypeptide: Expansin-B6 (259 aa).

An N-terminal signal peptide occupies residues 1–24; sequence MASSSHRYFALLALFAVSLKFCYC. A glycan (N-linked (GlcNAc...) asparagine) is linked at asparagine 26. The Expansin-like EG45 domain maps to 52 to 160; the sequence is GGACGFAVAN…IRVECLYRRT (109 aa). Cystine bridges form between cysteine 55/cysteine 82, cysteine 85/cysteine 155, and cysteine 90/cysteine 96. Residues 173–254 enclose the Expansin-like CBD domain; the sequence is YYISFVVEYE…NWKPNETYRS (82 aa). Asparagine 249 carries N-linked (GlcNAc...) asparagine glycosylation.

This sequence belongs to the expansin family. Expansin B subfamily.

It localises to the secreted. It is found in the cell wall. Its subcellular location is the membrane. In terms of biological role, may cause loosening and extension of plant cell walls by disrupting non-covalent bonding between cellulose microfibrils and matrix glucans. The polypeptide is Expansin-B6 (Arabidopsis thaliana (Mouse-ear cress)).